The chain runs to 188 residues: Acireductone dioxygenase (188 aa).

Residues 1–20 (MSRLRIFADSNPTTPHFDSR) are disordered. Fe(2+)-binding residues include His-97, His-99, Glu-103, and His-141. Residues His-97, His-99, Glu-103, and His-141 each contribute to the Ni(2+) site.

It belongs to the acireductone dioxygenase (ARD) family. As to quaternary structure, monomer. Fe(2+) is required as a cofactor. It depends on Ni(2+) as a cofactor.

The catalysed reaction is 1,2-dihydroxy-5-(methylsulfanyl)pent-1-en-3-one + O2 = 3-(methylsulfanyl)propanoate + CO + formate + 2 H(+). The enzyme catalyses 1,2-dihydroxy-5-(methylsulfanyl)pent-1-en-3-one + O2 = 4-methylsulfanyl-2-oxobutanoate + formate + 2 H(+). It participates in amino-acid biosynthesis; L-methionine biosynthesis via salvage pathway; L-methionine from S-methyl-5-thio-alpha-D-ribose 1-phosphate: step 5/6. In terms of biological role, catalyzes 2 different reactions between oxygen and the acireductone 1,2-dihydroxy-3-keto-5-methylthiopentene (DHK-MTPene) depending upon the metal bound in the active site. Fe-containing acireductone dioxygenase (Fe-ARD) produces formate and 2-keto-4-methylthiobutyrate (KMTB), the alpha-ketoacid precursor of methionine in the methionine recycle pathway. Ni-containing acireductone dioxygenase (Ni-ARD) produces methylthiopropionate, carbon monoxide and formate, and does not lie on the methionine recycle pathway. In Xanthomonas campestris pv. campestris (strain 8004), this protein is Acireductone dioxygenase.